We begin with the raw amino-acid sequence, 2068 residues long: uncharacterized protein (2068 aa).

The next 2 membrane-spanning stretches (helical) occupy residues 3–23 (FFII…NFCS) and 51–71 (TIYL…YYYI). The segment covering 975–998 (QMHSGEDEKEELGEPKEKGSKSCQ) has biased composition (basic and acidic residues). Residues 975–1030 (QMHSGEDEKEELGEPKEKGSKSCQEEEEQDEEEEDEDEEEEEDQGVNNYDNYVDGV) are disordered. Over residues 999 to 1018 (EEEEQDEEEEDEDEEEEEDQ) the composition is skewed to acidic residues. A helical membrane pass occupies residues 1890 to 1910 (FLYNLSFIYNVYNYLILIYIY).

The protein localises to the membrane. This is an uncharacterized protein from Plasmodium falciparum (isolate 3D7).